The sequence spans 264 residues: DNA repair protein RecO (264 aa).

Belongs to the RecO family.

In terms of biological role, involved in DNA repair and RecF pathway recombination. The protein is DNA repair protein RecO of Prosthecochloris aestuarii (strain DSM 271 / SK 413).